A 1129-amino-acid chain; its full sequence is Large proline-rich protein bag6 (1129 aa).

Residues 1-76 enclose the Ubiquitin-like domain; the sequence is MEVTVKTLDS…HLVERAPPQT (76 aa). 8 disordered regions span residues 69–108, 187–235, 347–402, 490–518, 550–606, 654–692, 942–967, and 987–1009; these read VERA…PERN, QPVN…SPSE, TGNG…HPHP, PAAP…VPGA, GSNT…QHLS, VPVS…ESLP, VPQA…NGAA, and VPTI…QWAA. The span at 73–105 shows a compositional bias: low complexity; the sequence is PPQTQPSTGGPSTSSSTSPSSSNAANVPGAGAP. Polar residues-rich tracts occupy residues 209 to 232 and 364 to 383; these read RETL…SHPS and HTPT…QPPS. Composition is skewed to low complexity over residues 553–593 and 655–666; these read TPSS…SSGP and PVSTSPPQSASQ. Residues 667 to 686 are compositionally biased toward pro residues; the sequence is APPPSSPSPPPAHSSPPPAA. Residues 947–956 show a composition bias toward polar residues; sequence EASSQDQPME.

In terms of assembly, component of the bag6/bat3 complex.

The protein localises to the cytoplasm. It is found in the cytosol. It localises to the nucleus. Its subcellular location is the secreted. The protein resides in the extracellular exosome. Functionally, ATP-independent molecular chaperone preventing the aggregation of misfolded and hydrophobic patches-containing proteins. Functions as part of a cytosolic protein quality control complex, the bag6/bat3 complex, which maintains these client proteins in a soluble state and participates in their proper delivery to the endoplasmic reticulum or alternatively can promote their sorting to the proteasome where they undergo degradation. The bag6/bat3 complex is involved in the post-translational delivery of tail-anchored/type II transmembrane proteins to the endoplasmic reticulum membrane. Similarly, the bag6/bat3 complex also functions as a sorting platform for proteins of the secretory pathway that are mislocalized to the cytosol either delivering them to the proteasome for degradation or to the endoplasmic reticulum. The bag6/bat3 complex also plays a role in the endoplasmic reticulum-associated degradation (ERAD), a quality control mechanism that eliminates unwanted proteins of the endoplasmic reticulum through their retrotranslocation to the cytosol and their targeting to the proteasome. It maintains these retrotranslocated proteins in an unfolded yet soluble state condition in the cytosol to ensure their proper delivery to the proteasome. Also required for selective ubiquitin-mediated degradation of defective nascent chain polypeptides by the proteasome. Also involved in endoplasmic reticulum stress-induced pre-emptive quality control, a mechanism that selectively attenuates the translocation of newly synthesized proteins into the endoplasmic reticulum and reroutes them to the cytosol for proteasomal degradation. May ensure the proper degradation of these proteins and thereby protects the endoplasmic reticulum from protein overload upon stress. By stabilizing a large spectrum of proteins, may indirectly affect different biological processes including apoptosis. By controlling the steady-state expression of the IGF1R receptor, indirectly regulates the insulin-like growth factor receptor signaling pathway. When nuclear, may also act as a component of some chromatin regulator complex. In Xenopus tropicalis (Western clawed frog), this protein is Large proline-rich protein bag6.